A 130-amino-acid polypeptide reads, in one-letter code: Small ribosomal subunit protein uS8 (130 aa).

Belongs to the universal ribosomal protein uS8 family. In terms of assembly, part of the 30S ribosomal subunit. Contacts proteins S5 and S12.

Functionally, one of the primary rRNA binding proteins, it binds directly to 16S rRNA central domain where it helps coordinate assembly of the platform of the 30S subunit. This chain is Small ribosomal subunit protein uS8, found in Shigella boydii serotype 18 (strain CDC 3083-94 / BS512).